A 685-amino-acid chain; its full sequence is Transforming growth factor beta activator LRRC33 (685 aa).

A signal peptide spans 1–27 (MPVCGCLSVVLSHAVVLLMLVLHSASG). Residues 28-640 (HPQTFPCRLI…CGFTNNNKES (613 aa)) are Extracellular-facing. Residues 29–56 (PQTFPCRLIQRVALCSGRQLSVIPDCLP) form the LRRNT domain. LRR repeat units follow at residues 57–79 (HETE…LSRY), 80–102 (PFLR…AFIE), 103–129 (SHLL…AFRS), 130–154 (LTQL…LVAN), 155–178 (LSSL…TFRD), 180–201 (HQLK…AFDH), and 202–225 (MKKL…EMTQ). The N-linked (GlcNAc...) asparagine glycan is linked to Asn-154. 2 N-linked (GlcNAc...) asparagine glycosylation sites follow: Asn-230 and Asn-244. LRR repeat units follow at residues 248–271 (TFQL…PTNN) and 273–296 (IRTL…TSSN). Residues Asn-291, Asn-296, Asn-309, Asn-312, and Asn-325 are each glycosylated (N-linked (GlcNAc...) asparagine). 11 LRR repeats span residues 326-349 (LSSV…FIKQ), 351-373 (PQLY…SEDL), 374-397 (PVTI…QTSK), 400-423 (LNNL…IFTS), 425-447 (PNLN…NYMG), 457-480 (MASL…AFKG), 482-503 (SLTH…SLKG), 505-526 (ANTL…FSPY), 527-549 (TNLK…LMAL), 551-571 (LKLL…HASL), and 573-596 (AKKL…WFRT). Residues Asn-402 and Asn-407 are each glycosylated (N-linked (GlcNAc...) asparagine). An N-linked (GlcNAc...) asparagine glycan is attached at Asn-533. An LRRCT domain is found at 597–635 (FGENKGIHVADLSEITCLDLNYRRHKVVLTDAVYCGFTN). Residues 641–661 (VVWYILLFVTVSVSIMGISVI) form a helical membrane-spanning segment. The Cytoplasmic portion of the chain corresponds to 662 to 685 (YMLTFKPRMLPRVIKKKCWRPTSY).

It belongs to the LRRC32/LRRC33 family.

The protein resides in the cell membrane. The protein localises to the endoplasmic reticulum membrane. Functionally, key regulator of transforming growth factor beta-1 (TGFB1) specifically required for microglia function in the nervous system. Required for activation of latent TGF-beta-1 in macrophages and microglia: associates specifically via disulfide bonds with the Latency-associated peptide (LAP), which is the regulatory chain of TGFB1, and regulates integrin-dependent activation of TGF-beta-1. TGF-beta-1 activation mediated by lrrc33/nrros is highly localized: there is little spreading of TGF-beta-1 activated from one microglial cell to neighboring microglia, suggesting the existence of localized and selective activation of TGF-beta-1 by lrrc33/nrros. The polypeptide is Transforming growth factor beta activator LRRC33 (Danio rerio (Zebrafish)).